The following is a 103-amino-acid chain: Small ribosomal subunit protein uS10 (103 aa).

This sequence belongs to the universal ribosomal protein uS10 family. Part of the 30S ribosomal subunit.

Functionally, involved in the binding of tRNA to the ribosomes. This Chlorobaculum tepidum (strain ATCC 49652 / DSM 12025 / NBRC 103806 / TLS) (Chlorobium tepidum) protein is Small ribosomal subunit protein uS10.